Consider the following 393-residue polypeptide: Phospholipid-transporting ATPase accessory subunit CRF1 (393 aa).

Over 1-46 the chain is Cytoplasmic; it reads MGLILRWKEKKQLSSKQNAQKSRKPANTSFRQQRLKAWQPILSPQS. A helical membrane pass occupies residues 47–67; that stretch reads VLPLLILMACVFAPIGIGLVV. The Lumenal segment spans residues 68–334; the sequence is STISVQRLVV…NSIIGAGNEA (267 aa). A confers specificity for binding DNF3 region spans residues 70–332; the sequence is ISVQRLVVNY…TTNSIIGAGN (263 aa). N-linked (GlcNAc...) asparagine glycosylation is found at N78, N123, N187, N202, N213, N240, and N291. Cystine bridges form between C82/C126 and C179/C193. The chain crosses the membrane as a helical span at residues 335-355; that stretch reads LGIVYLIVAGIATLFAILFLI. Residues 356–393 lie on the Cytoplasmic side of the membrane; it reads KVIFKPRPMHDHSYLNFENSDTPFDESSVVSIPLREIL.

It belongs to the CDC50/LEM3 family. As to quaternary structure, component of a flippase complex consisting of DNF3 and YNR048W/CRF1. Interacts with DNF3; the interaction is direct and required for proper expression and endoplasmic reticulum (ER) export of either partner.

It localises to the golgi apparatus. The protein localises to the trans-Golgi network membrane. Its function is as follows. Accessory component of a P4-ATPase flippase complex which catalyzes the hydrolysis of ATP coupled to the transport of phosphatidylcholine and small amounts of phosphatidylethanolamine from the lumen to the cytosolic leaflet of the trans-Golgi network and ensures the maintenance of asymmetric distribution of phospholipids. May be involved in transport from early endosomes to the trans-Golgi network (TGN). This chain is Phospholipid-transporting ATPase accessory subunit CRF1, found in Saccharomyces cerevisiae (strain ATCC 204508 / S288c) (Baker's yeast).